Consider the following 105-residue polypeptide: Large ribosomal subunit protein uL24 (105 aa).

It belongs to the universal ribosomal protein uL24 family. As to quaternary structure, part of the 50S ribosomal subunit.

In terms of biological role, one of two assembly initiator proteins, it binds directly to the 5'-end of the 23S rRNA, where it nucleates assembly of the 50S subunit. Functionally, one of the proteins that surrounds the polypeptide exit tunnel on the outside of the subunit. The protein is Large ribosomal subunit protein uL24 of Staphylococcus haemolyticus (strain JCSC1435).